We begin with the raw amino-acid sequence, 2311 residues long: Protein Ycf2 (2311 aa).

1652–1659 contributes to the ATP binding site; it reads GSIGTGRS.

The protein belongs to the Ycf2 family.

It is found in the plastid. It localises to the chloroplast stroma. Its function is as follows. Probable ATPase of unknown function. Its presence in a non-photosynthetic plant (Epifagus virginiana) and experiments in tobacco indicate that it has an essential function which is probably not related to photosynthesis. This Lemna minor (Common duckweed) protein is Protein Ycf2.